The following is a 247-amino-acid chain: MASQSPDEAAEAQVSDELECKICYNRYNLKQRKPKVLECCHRVCAKCLYKIIDFGDSPQGVIVCPFCRFETCLPDEEVSSLPDDSNILVNLTCGGKGKKGLPENPTELLLTPKRLASLVSPSHTSSNCLVITIMEVQRESSPSLSSTPVVEFYRPASFDSVTTVSHNWTVWKCTSLLFQTSIRVLVWLLGLLYFSSLPLGIYLLVSKKVTLGVVFVSLVPSSLVILMVYGFCQCVCHEFLDCVAPSS.

An RING-type zinc finger spans residues 20 to 68 (CKICYNRYNLKQRKPKVLECCHRVCAKCLYKIIDFGDSPQGVIVCPFCR). 2 helical membrane-spanning segments follow: residues 184 to 204 (VLVW…IYLL) and 211 to 231 (LGVV…VYGF).

Interacts with ATP6V0C.

The protein localises to the membrane. It is found in the cytoplasm. It carries out the reaction S-ubiquitinyl-[E2 ubiquitin-conjugating enzyme]-L-cysteine + [acceptor protein]-L-lysine = [E2 ubiquitin-conjugating enzyme]-L-cysteine + N(6)-ubiquitinyl-[acceptor protein]-L-lysine.. It functions in the pathway protein modification; protein ubiquitination. Its function is as follows. E3 ubiquitin-protein ligase that mediates the ubiquitination of ATP6V0C and targets it to degradation via the ubiquitin-proteasome pathway. Also plays a role in the inhibition of TLR-triggered innate immune response by mediating 'Lys'-48-linked ubiquitination and subsequent degradation of NF-kappa-B component RELA. This Ailuropoda melanoleuca (Giant panda) protein is E3 ubiquitin-protein ligase RNF182 (RNF182).